The chain runs to 499 residues: Glucosylglycerol-phosphate synthase (499 aa).

It belongs to the glycosyltransferase 20 family. In terms of assembly, interacts with GGP-P. Post-translationally, seems to be degraded, at least in vitro, by FtsH2. In an ftsH2 disruption strain inactive GGPS accumulates.

It localises to the cytoplasm. It carries out the reaction ADP-alpha-D-glucose + sn-glycerol 3-phosphate = 2-O-(alpha-D-glucopyranosyl)-sn-glycerol 3-phosphate + ADP + H(+). Its pathway is glycan metabolism; glucosylglycerol biosynthesis. Involved in salt tolerance by producing GG-phosphate from ADP-glucose and glycerol-3-phosphate (G3P), an intermediate in the synthesis of the osmolyte glucosylglycerol (GG). The sequence is that of Glucosylglycerol-phosphate synthase (ggpS) from Synechocystis sp. (strain ATCC 27184 / PCC 6803 / Kazusa).